A 1560-amino-acid chain; its full sequence is Lysine-specific demethylase 5C (1560 aa).

The JmjN domain occupies Cys14–Pro55. Residues Thr79–Ser169 enclose the ARID domain. Residues Leu197 to Asn207 are compositionally biased toward polar residues. Residues Leu197 to Ile227 form a disordered region. Glycyl lysine isopeptide (Lys-Gly) (interchain with G-Cter in SUMO2) cross-links involve residues Lys205, Lys229, Lys244, and Lys274. Position 287 is a phosphoserine (Ser287). Lys295 is covalently cross-linked (Glycyl lysine isopeptide (Lys-Gly) (interchain with G-Cter in SUMO2)). Phosphoserine is present on residues Ser301 and Ser317. The segment at Val326–Val372 adopts a PHD-type 1 zinc-finger fold. A 2-oxoglutarate-binding site is contributed by Tyr440. Positions Glu468–Arg634 constitute a JmjC domain. Fe cation contacts are provided by His514 and Glu516. 2-oxoglutarate contacts are provided by Ser522, Asn524, and Lys532. Residue His602 participates in Fe cation binding. The C5HC2 zinc-finger motif lies at Cys707 to Met759. A phosphoserine mark is found at Ser893 and Ser897. Lys1127 is covalently cross-linked (Glycyl lysine isopeptide (Lys-Gly) (interchain with G-Cter in SUMO2)). A disordered region spans residues Ile1161 to Ala1181. Residues Ser1169 to Ala1181 show a composition bias toward low complexity. The PHD-type 2 zinc-finger motif lies at Ile1187 to Met1248. Disordered regions lie at residues Gln1316–Lys1371 and Glu1444–Leu1560. Over residues Pro1335–Pro1345 the composition is skewed to basic and acidic residues. Ser1359 carries the post-translational modification Phosphoserine. Positions Ser1448 to Val1463 are enriched in basic residues. The span at Asp1464–Arg1481 shows a compositional bias: basic and acidic residues. Positions Glu1488–Gly1503 are enriched in acidic residues. Polar residues predominate over residues Ser1516–Thr1544.

It belongs to the JARID1 histone demethylase family. In terms of assembly, part of two distinct complexes, one containing E2F6, and the other containing REST. Interacts with ZMYND8. Fe(2+) is required as a cofactor. As to expression, expressed in all tissues examined. Highest levels found in brain and skeletal muscle.

Its subcellular location is the nucleus. It carries out the reaction N(6),N(6),N(6)-trimethyl-L-lysyl(4)-[histone H3] + 3 2-oxoglutarate + 3 O2 = L-lysyl(4)-[histone H3] + 3 formaldehyde + 3 succinate + 3 CO2. With respect to regulation, the inhibitor KDOAM-25 and others inhibit its demethylase activity, resulting to cell cycle arrest in myeloma cells. Its function is as follows. Histone demethylase that specifically demethylates 'Lys-4' of histone H3, thereby playing a central role in histone code. Does not demethylate histone H3 'Lys-9', H3 'Lys-27', H3 'Lys-36', H3 'Lys-79' or H4 'Lys-20'. Demethylates trimethylated and dimethylated but not monomethylated H3 'Lys-4'. Participates in transcriptional repression of neuronal genes by recruiting histone deacetylases and REST at neuron-restrictive silencer elements. Represses the CLOCK-BMAL1 heterodimer-mediated transcriptional activation of the core clock component PER2. The sequence is that of Lysine-specific demethylase 5C from Homo sapiens (Human).